Consider the following 867-residue polypeptide: Probable beta-glucosidase A (867 aa).

Residues 1–18 form the signal peptide; that stretch reads MRFSWLEVAVTAASLANA. N-linked (GlcNAc...) asparagine glycosylation is found at Asn-67, Asn-218, and Asn-259. Asp-287 is a catalytic residue. Residues Asn-322, Asn-329, Asn-361, Asn-449, Asn-530, Asn-549, Asn-571, Asn-675, and Asn-719 are each glycosylated (N-linked (GlcNAc...) asparagine).

The protein belongs to the glycosyl hydrolase 3 family.

Its subcellular location is the secreted. It catalyses the reaction Hydrolysis of terminal, non-reducing beta-D-glucosyl residues with release of beta-D-glucose.. The protein operates within glycan metabolism; cellulose degradation. Beta-glucosidases are one of a number of cellulolytic enzymes involved in the degradation of cellulosic biomass. Catalyzes the last step releasing glucose from the inhibitory cellobiose. The chain is Probable beta-glucosidase A (bglA) from Aspergillus clavatus (strain ATCC 1007 / CBS 513.65 / DSM 816 / NCTC 3887 / NRRL 1 / QM 1276 / 107).